We begin with the raw amino-acid sequence, 491 residues long: Trehalose-6-phosphate synthase (491 aa).

D-glucose 6-phosphate is bound at residue arginine 22. 42–43 is a UDP-alpha-D-glucose binding site; the sequence is GG. Residues tyrosine 100 and aspartate 154 each contribute to the D-glucose 6-phosphate site. Positions 296 and 301 each coordinate UDP-alpha-D-glucose. Residue arginine 334 coordinates D-glucose 6-phosphate. 399–403 contributes to the UDP-alpha-D-glucose binding site; sequence LVAKE.

This sequence belongs to the glycosyltransferase 20 family. In terms of assembly, homotetramer.

It catalyses the reaction ADP-alpha-D-glucose + D-glucose 6-phosphate = alpha,alpha-trehalose 6-phosphate + ADP + H(+). The enzyme catalyses CDP-alpha-D-glucose + D-glucose 6-phosphate = alpha,alpha-trehalose 6-phosphate + CDP + H(+). It carries out the reaction GDP-alpha-D-glucose + D-glucose 6-phosphate = alpha,alpha-trehalose 6-phosphate + GDP + H(+). The catalysed reaction is TDP-alpha-D-glucose + D-glucose 6-phosphate = 5-methyl-UDP + alpha,alpha-trehalose 6-phosphate + H(+). It catalyses the reaction D-glucose 6-phosphate + UDP-alpha-D-glucose = alpha,alpha-trehalose 6-phosphate + UDP + H(+). It functions in the pathway glycan biosynthesis; trehalose biosynthesis. Probably involved in the osmoprotection via the biosynthesis of trehalose and in the production of glycogen and alpha-glucan via the TreS-Pep2 branch involved in the biosynthesis of maltose-1-phosphate (M1P). Catalyzes the transfer of glucose from UDP-glucose (UDP-Glc) to D-glucose 6-phosphate (Glc-6-P) to form trehalose-6-phosphate. Probably also able to use ADP-Glc, CDP-Glc, GDP-Glc and TDP-Glc as glucosyl donors. The chain is Trehalose-6-phosphate synthase from Mycolicibacterium vanbaalenii (strain DSM 7251 / JCM 13017 / BCRC 16820 / KCTC 9966 / NRRL B-24157 / PYR-1) (Mycobacterium vanbaalenii).